The following is a 188-amino-acid chain: ATP synthase subunit delta (188 aa).

It belongs to the ATPase delta chain family. F-type ATPases have 2 components, F(1) - the catalytic core - and F(0) - the membrane proton channel. F(1) has five subunits: alpha(3), beta(3), gamma(1), delta(1), epsilon(1). F(0) has three main subunits: a(1), b(2) and c(10-14). The alpha and beta chains form an alternating ring which encloses part of the gamma chain. F(1) is attached to F(0) by a central stalk formed by the gamma and epsilon chains, while a peripheral stalk is formed by the delta and b chains.

The protein localises to the cell inner membrane. In terms of biological role, f(1)F(0) ATP synthase produces ATP from ADP in the presence of a proton or sodium gradient. F-type ATPases consist of two structural domains, F(1) containing the extramembraneous catalytic core and F(0) containing the membrane proton channel, linked together by a central stalk and a peripheral stalk. During catalysis, ATP synthesis in the catalytic domain of F(1) is coupled via a rotary mechanism of the central stalk subunits to proton translocation. Its function is as follows. This protein is part of the stalk that links CF(0) to CF(1). It either transmits conformational changes from CF(0) to CF(1) or is implicated in proton conduction. The sequence is that of ATP synthase subunit delta from Rhizobium etli (strain ATCC 51251 / DSM 11541 / JCM 21823 / NBRC 15573 / CFN 42).